Here is a 92-residue protein sequence, read N- to C-terminus: MEFLLQLENILKKRKQDLPDKSYTADLFRGGVDRILKKVGEEAGEVIIAAKNSDKKELTHEVADLLFHLQVLLVEQGLSLQEIVEELHKRHS.

Belongs to the PRA-PH family.

The protein localises to the cytoplasm. It carries out the reaction 1-(5-phospho-beta-D-ribosyl)-ATP + H2O = 1-(5-phospho-beta-D-ribosyl)-5'-AMP + diphosphate + H(+). The protein operates within amino-acid biosynthesis; L-histidine biosynthesis; L-histidine from 5-phospho-alpha-D-ribose 1-diphosphate: step 2/9. This chain is Phosphoribosyl-ATP pyrophosphatase, found in Leptospira interrogans serogroup Icterohaemorrhagiae serovar copenhageni (strain Fiocruz L1-130).